A 290-amino-acid polypeptide reads, in one-letter code: 4-hydroxybenzoate octaprenyltransferase (290 aa).

Helical transmembrane passes span 41-61, 89-109, 133-153, 158-178, 202-224, and 269-289; these read WPLL…GCAM, WEAV…IQPL, FFAI…PMAF, DTVP…SVAY, FGRF…YVWI, and WLGG…GTAG.

The protein belongs to the UbiA prenyltransferase family. It depends on Mg(2+) as a cofactor.

It is found in the cell inner membrane. It catalyses the reaction all-trans-octaprenyl diphosphate + 4-hydroxybenzoate = 4-hydroxy-3-(all-trans-octaprenyl)benzoate + diphosphate. Its pathway is cofactor biosynthesis; ubiquinone biosynthesis. Catalyzes the prenylation of para-hydroxybenzoate (PHB) with an all-trans polyprenyl group. Mediates the second step in the final reaction sequence of ubiquinone-8 (UQ-8) biosynthesis, which is the condensation of the polyisoprenoid side chain with PHB, generating the first membrane-bound Q intermediate 3-octaprenyl-4-hydroxybenzoate. In Burkholderia ambifaria (strain MC40-6), this protein is 4-hydroxybenzoate octaprenyltransferase.